We begin with the raw amino-acid sequence, 145 residues long: MSRRSSFPVHLHGRSMLLVFVGGALGTAARALLSAAAPTVAVISVITFVINVIGAFVLGWLLESLALRGPDEGRRRDVRLFAGTGVLGGFTTYSAFAVDTDGLIVASNVGGGILYAAATIAIGAAAYLAGIALGAAIGCRRGVSA.

Transmembrane regions (helical) follow at residues 16 to 36 (MLLVFVGGALGTAARALLSAA), 42 to 62 (VISVITFVINVIGAFVLGWLL), 80 to 100 (LFAGTGVLGGFTTYSAFAVDT), and 113 to 133 (ILYAAATIAIGAAAYLAGIAL). Na(+) is bound by residues glycine 88 and threonine 91.

The protein belongs to the fluoride channel Fluc/FEX (TC 1.A.43) family.

Its subcellular location is the cell membrane. It carries out the reaction fluoride(in) = fluoride(out). Its activity is regulated as follows. Na(+) is not transported, but it plays an essential structural role and its presence is essential for fluoride channel function. In terms of biological role, fluoride-specific ion channel. Important for reducing fluoride concentration in the cell, thus reducing its toxicity. The chain is Fluoride-specific ion channel FluC 2 from Leifsonia xyli subsp. xyli (strain CTCB07).